Consider the following 215-residue polypeptide: Ras-related protein Rab-5A (215 aa).

The GTP site is built by Ser-29, Ala-30, Gly-32, Lys-33, Ser-34, Ser-35, His-46, Glu-47, Thr-52, and Gly-78. Ser-34 contributes to the Mg(2+) binding site. 2 consecutive short sequence motifs (switch) follow at residues 44–56 (QFHE…IGAA) and 77–93 (AGQE…YRGA). Thr-52 contributes to the Mg(2+) binding site. A Phosphoserine; by LRRK2 modification is found at Ser-84. A glycan ((Microbial infection) N-beta-linked (GlcNAc) arginine) is linked at Arg-120. Positions 133, 134, 136, 164, and 165 each coordinate GTP. The disordered stretch occupies residues 181–215 (LPKNEPQNPGANSARGRGVDLTEPTQPTRNQCCSN). Residues 203 to 215 (EPTQPTRNQCCSN) show a composition bias toward polar residues. S-geranylgeranyl cysteine attachment occurs at residues Cys-212 and Cys-213.

Belongs to the small GTPase superfamily. Rab family. Interacts with SGSM1 and SGSM3. Interacts with PIK3CB. Interacts with GDI1; this promotes dissociation from membranes; phosphorylation at Ser-84 disrupts this interaction. Interacts with GDI2; phosphorylation at Ser-84 disrupts the interaction. Interacts with EEA1. Interacts with RIN1 and GAPVD1, which regulate its pathway, probably by acting as a GEF. Interacts with RINL. Interacts with ALS2CL, SUN2, ZFYVE20 and RUFY1. Interacts with RABEP1; one RABEP1 homodimer binds two RAB5A chains, but at opposite sides of the dimer. Interacts with OCRL. Interacts with INPP5F. May be a component of a complex composed of RAB5A, DYN2 and PIK3C3. Does not interact with BLOC-3 complex (heterodimer of HPS1 and HPS4). Interacts with CLN5. Interacts with APPL2. Interacts with F8A1/F8A2/F8A3. Found in a complex with F8A1/F8A2/F8A3, HTT and RAB5A; mediates the recruitment of HTT by RAB5A onto early endosomes. Interacts with ATP9A. Interacts with PPP1R21; mediates the recruitment of FERRY complex by RAB5A onto early endosomes. It depends on Mg(2+) as a cofactor. Phosphorylation of Ser-84 in the switch II region by LRRK2 prevents the association of RAB regulatory proteins, including RAB GDP dissociation inhibitors GDI1 and GDI2. In terms of processing, (Microbial infection) Glycosylated on arginine residues by S.typhimurium protein Ssek3.

The protein localises to the cell membrane. It localises to the early endosome membrane. The protein resides in the melanosome. It is found in the cytoplasmic vesicle. Its subcellular location is the cell projection. The protein localises to the ruffle. It localises to the membrane. The protein resides in the cytoplasm. It is found in the cytosol. Its subcellular location is the phagosome membrane. The protein localises to the endosome membrane. The catalysed reaction is GTP + H2O = GDP + phosphate + H(+). Its activity is regulated as follows. Regulated by guanine nucleotide exchange factors (GEFs) including RINL, which promote the exchange of bound GDP for free GTP. Regulated by GTPase activating proteins (GAPs) which increase the GTP hydrolysis activity. Inhibited by GDP dissociation inhibitors (GDIs). In terms of biological role, the small GTPases Rab are key regulators of intracellular membrane trafficking, from the formation of transport vesicles to their fusion with membranes. Rabs cycle between an inactive GDP-bound form and an active GTP-bound form that is able to recruit to membranes different sets of downstream effectors directly responsible for vesicle formation, movement, tethering and fusion. RAB5A is required for the fusion of plasma membranes and early endosomes. Contributes to the regulation of filopodia extension. Required for the exosomal release of SDCBP, CD63, PDCD6IP and syndecan. Regulates maturation of apoptotic cell-containing phagosomes, probably downstream of DYN2 and PIK3C3. This chain is Ras-related protein Rab-5A, found in Homo sapiens (Human).